Consider the following 752-residue polypeptide: Photosystem I P700 chlorophyll a apoprotein A1 (752 aa).

The next 8 helical transmembrane spans lie at 73–96 (IFSA…FHGA), 159–182 (LYCT…FHYH), 198–222 (MNHH…HLSL), 294–312 (TAHH…GHMY), 349–372 (WHAQ…HHMY), 388–414 (LSLF…IFMV), 436–458 (AIVS…LYIH), and 533–551 (FMVH…LILV). Residues Cys-575 and Cys-584 each contribute to the [4Fe-4S] cluster site. The next 2 membrane-spanning stretches (helical) occupy residues 591-612 (HVFL…HFSW) and 666-688 (LSAY…MFLF). His-677 is a chlorophyll a' binding site. Positions 685 and 693 each coordinate chlorophyll a. Trp-694 lines the phylloquinone pocket. Residues 726-746 (AVGVAHYLLGGIGTTWAFFLA) traverse the membrane as a helical segment.

This sequence belongs to the PsaA/PsaB family. As to quaternary structure, the PsaA/B heterodimer binds the P700 chlorophyll special pair and subsequent electron acceptors. PSI consists of a core antenna complex that captures photons, and an electron transfer chain that converts photonic excitation into a charge separation. The eukaryotic PSI reaction center is composed of at least 11 subunits. The cofactor is P700 is a chlorophyll a/chlorophyll a' dimer, A0 is one or more chlorophyll a, A1 is one or both phylloquinones and FX is a shared 4Fe-4S iron-sulfur center..

It is found in the plastid. It localises to the chloroplast thylakoid membrane. The enzyme catalyses reduced [plastocyanin] + hnu + oxidized [2Fe-2S]-[ferredoxin] = oxidized [plastocyanin] + reduced [2Fe-2S]-[ferredoxin]. Functionally, psaA and PsaB bind P700, the primary electron donor of photosystem I (PSI), as well as the electron acceptors A0, A1 and FX. PSI is a plastocyanin/cytochrome c6-ferredoxin oxidoreductase, converting photonic excitation into a charge separation, which transfers an electron from the donor P700 chlorophyll pair to the spectroscopically characterized acceptors A0, A1, FX, FA and FB in turn. Oxidized P700 is reduced on the lumenal side of the thylakoid membrane by plastocyanin or cytochrome c6. In Porphyra purpurea (Red seaweed), this protein is Photosystem I P700 chlorophyll a apoprotein A1.